Consider the following 105-residue polypeptide: Large ribosomal subunit protein uL18c (105 aa).

Belongs to the universal ribosomal protein uL18 family. As to quaternary structure, part of the 50S ribosomal subunit; contacts the 5S rRNA.

Its subcellular location is the plastid. The protein resides in the chloroplast. In terms of biological role, binds 5S rRNA, forms part of the central protuberance of the 50S subunit. This Cyanidium caldarium (Red alga) protein is Large ribosomal subunit protein uL18c (rpl18).